The primary structure comprises 582 residues: Phosphoglucomutase, cytoplasmic (582 aa).

Residues Arg25 and Ser124 each coordinate alpha-D-glucose 1,6-bisphosphate. The Phosphoserine intermediate role is filled by Ser124. Mg(2+)-binding residues include Ser124, Asp299, Asp301, and Asp303. Position 124 is a phosphoserine (Ser124). Alpha-D-glucose 1,6-bisphosphate contacts are provided by Asp303, Arg304, Thr367, Glu386, Ser388, and Lys399.

This sequence belongs to the phosphohexose mutase family. As to quaternary structure, monomer. Requires Mg(2+) as cofactor.

It is found in the cytoplasm. It carries out the reaction alpha-D-glucose 1-phosphate = alpha-D-glucose 6-phosphate. It catalyses the reaction O-phospho-L-seryl-[protein] + alpha-D-glucose 1-phosphate = alpha-D-glucose 1,6-bisphosphate + L-seryl-[protein]. The catalysed reaction is alpha-D-glucose 1,6-bisphosphate + L-seryl-[protein] = O-phospho-L-seryl-[protein] + alpha-D-glucose 6-phosphate. Functionally, catalyzes the reversible isomerization of alpha-D-glucose 1-phosphate to alpha-D-glucose 6-phosphate. The mechanism proceeds via the intermediate compound alpha-D-glucose 1,6-bisphosphate. This enzyme participates in both the breakdown and synthesis of glucose. This is Phosphoglucomutase, cytoplasmic (PGM1) from Populus tremula (European aspen).